A 734-amino-acid polypeptide reads, in one-letter code: Transcription factor EMB1444 (734 aa).

The segment at 537–566 (QFPTSLEIPKKNKKRAKPGESSRPRPRDRQ) is disordered. Residues 548–555 (NKKRAKPG) carry the Nuclear localization signal motif. A bHLH domain is found at 552-601 (AKPGESSRPRPRDRQLIQDRIKELRELVPNGSKCSIDSLLECTIKHMLFL). The span at 553–566 (KPGESSRPRPRDRQ) shows a compositional bias: basic and acidic residues.

This sequence belongs to the bHLH protein family. LHW subfamily. Homodimer.

The protein resides in the nucleus. In terms of biological role, transcription factor that may regulate root development. The polypeptide is Transcription factor EMB1444 (Arabidopsis thaliana (Mouse-ear cress)).